A 154-amino-acid chain; its full sequence is 17 kDa A-type inclusion protein (154 aa).

Positions 17–85 (QKDCSDKLDR…YKRELERDRY (69 aa)) form a coiled coil. The disordered stretch occupies residues 88-154 (SRYLTSSSDP…DVEPEHPPAF (67 aa)).

This chain is 17 kDa A-type inclusion protein, found in Bos taurus (Bovine).